Here is a 185-residue protein sequence, read N- to C-terminus: Ribosome-recycling factor (185 aa).

Belongs to the RRF family.

The protein localises to the cytoplasm. In terms of biological role, responsible for the release of ribosomes from messenger RNA at the termination of protein biosynthesis. May increase the efficiency of translation by recycling ribosomes from one round of translation to another. This is Ribosome-recycling factor from Buchnera aphidicola subsp. Acyrthosiphon pisum (strain Tuc7).